The sequence spans 309 residues: 4-hydroxy-3-methylbut-2-enyl diphosphate reductase (309 aa).

Cysteine 12 is a [4Fe-4S] cluster binding site. 2 residues coordinate (2E)-4-hydroxy-3-methylbut-2-enyl diphosphate: histidine 43 and histidine 77. Residues histidine 43 and histidine 77 each contribute to the dimethylallyl diphosphate site. Isopentenyl diphosphate is bound by residues histidine 43 and histidine 77. Cysteine 99 is a binding site for [4Fe-4S] cluster. Histidine 127 provides a ligand contact to (2E)-4-hydroxy-3-methylbut-2-enyl diphosphate. Histidine 127 serves as a coordination point for dimethylallyl diphosphate. Histidine 127 is an isopentenyl diphosphate binding site. The active-site Proton donor is glutamate 129. Threonine 167 is a binding site for (2E)-4-hydroxy-3-methylbut-2-enyl diphosphate. Residue cysteine 197 coordinates [4Fe-4S] cluster. Residues serine 225, serine 226, asparagine 227, and serine 269 each contribute to the (2E)-4-hydroxy-3-methylbut-2-enyl diphosphate site. Dimethylallyl diphosphate contacts are provided by serine 225, serine 226, asparagine 227, and serine 269. Serine 225, serine 226, asparagine 227, and serine 269 together coordinate isopentenyl diphosphate.

This sequence belongs to the IspH family. The cofactor is [4Fe-4S] cluster.

It catalyses the reaction isopentenyl diphosphate + 2 oxidized [2Fe-2S]-[ferredoxin] + H2O = (2E)-4-hydroxy-3-methylbut-2-enyl diphosphate + 2 reduced [2Fe-2S]-[ferredoxin] + 2 H(+). It carries out the reaction dimethylallyl diphosphate + 2 oxidized [2Fe-2S]-[ferredoxin] + H2O = (2E)-4-hydroxy-3-methylbut-2-enyl diphosphate + 2 reduced [2Fe-2S]-[ferredoxin] + 2 H(+). It functions in the pathway isoprenoid biosynthesis; dimethylallyl diphosphate biosynthesis; dimethylallyl diphosphate from (2E)-4-hydroxy-3-methylbutenyl diphosphate: step 1/1. Its pathway is isoprenoid biosynthesis; isopentenyl diphosphate biosynthesis via DXP pathway; isopentenyl diphosphate from 1-deoxy-D-xylulose 5-phosphate: step 6/6. Catalyzes the conversion of 1-hydroxy-2-methyl-2-(E)-butenyl 4-diphosphate (HMBPP) into a mixture of isopentenyl diphosphate (IPP) and dimethylallyl diphosphate (DMAPP). Acts in the terminal step of the DOXP/MEP pathway for isoprenoid precursor biosynthesis. The sequence is that of 4-hydroxy-3-methylbut-2-enyl diphosphate reductase from Wolbachia pipientis wMel.